Here is a 356-residue protein sequence, read N- to C-terminus: MKKVVLAAGGTGGHIVPAALLCQVLADRGYRCVLYTDQYFLQYTARFPGIKGYVLLPLCKRSGGAVRLLKFCALLAYSCVLSYIKLRSLKPDLVIGFGAYASFPVLLSAWLMSVDAVLHEQNSVMGRVNRVFAGYARVIACGLPLRTVGNKLAHKVAHVGVPTDVKKAVKRPLAGDSINLVILGGSQGLCTFGKTFALAIAELPTNIRGRVFVTQQCGKGQLEVITELYARHGIKHKLSGFFTDMQNIIGEADLIISRAGATTIAEVMAAGRPAIYVPYERSSCSHQLYNAQLIESLGAGLCIEERTLDVSSARDALTNLLGDRNKLQEMSCNAAKHAMPDADAQFCAIVDGLLKG.

UDP-N-acetyl-alpha-D-glucosamine-binding positions include 11 to 13 (TGG), N122, S186, and Q287.

It belongs to the glycosyltransferase 28 family. MurG subfamily.

The protein resides in the cell inner membrane. The catalysed reaction is di-trans,octa-cis-undecaprenyl diphospho-N-acetyl-alpha-D-muramoyl-L-alanyl-D-glutamyl-meso-2,6-diaminopimeloyl-D-alanyl-D-alanine + UDP-N-acetyl-alpha-D-glucosamine = di-trans,octa-cis-undecaprenyl diphospho-[N-acetyl-alpha-D-glucosaminyl-(1-&gt;4)]-N-acetyl-alpha-D-muramoyl-L-alanyl-D-glutamyl-meso-2,6-diaminopimeloyl-D-alanyl-D-alanine + UDP + H(+). Its pathway is cell wall biogenesis; peptidoglycan biosynthesis. Cell wall formation. Catalyzes the transfer of a GlcNAc subunit on undecaprenyl-pyrophosphoryl-MurNAc-pentapeptide (lipid intermediate I) to form undecaprenyl-pyrophosphoryl-MurNAc-(pentapeptide)GlcNAc (lipid intermediate II). The polypeptide is UDP-N-acetylglucosamine--N-acetylmuramyl-(pentapeptide) pyrophosphoryl-undecaprenol N-acetylglucosamine transferase (Anaplasma marginale (strain St. Maries)).